The following is a 537-amino-acid chain: MEFPDHSRHLLQCLSEQRHQGFLCDSTVLVGDAQFRAHRAVLASCSMYFHLFYKDQLDKRDIVHLNSDIVTAPAFALLLEFMYEGKLQFKSLPVEDVLAAASYLHMYDIVKVCKKKLKQKATAEADSTKREEDTSSCSDKVESFSEGGSTGRPATADLLQSDDEDMENKRDSPQEPGSMWMRLPSDRTTSPTTSPREAETHGPDAGKSPAGSPSSSSGSLSRRSAASRRVSADTDCVLDLSVKSSLGGGPGENIAGNPYFCSSVTPDSLQSALVQVKVEKDTGSDDDELVSGDYEMEHSGVKEPPSTNGTHLSLVAQRRLGLEAHLSALREASLASELERDDKGGDDDTDVLGGDSDRVQEAAGVESSLLPYVSSMLGAPHTQIFMCPLCNKVFPSPHILQIHLSTHFREQEGVRAKPAGDVNVPTCSICGKTFSCMYTLKRHERTHSGEKPYTCTTCGKSFQYSHNLSRHAVVHTREKPHACKWCERRFTQSGDLYRHIRKFHCELVNSLSVKSEALNLPTVRDWALEDSSQELWK.

Residues 24–91 (CDSTVLVGDA…MYEGKLQFKS (68 aa)) enclose the BTB domain. Over residues 122-143 (TAEADSTKREEDTSSCSDKVES) the composition is skewed to basic and acidic residues. Disordered stretches follow at residues 122–232 (TAEA…RVSA) and 335–355 (ASEL…LGGD). Composition is skewed to low complexity over residues 182–195 (RLPS…TTSP) and 208–229 (SPAG…ASRR). 4 C2H2-type zinc fingers span residues 385-407 (FMCP…LSTH), 425-447 (PTCS…ERTH), 453-475 (YTCT…AVVH), and 481-504 (HACK…RKFH).

It belongs to the krueppel C2H2-type zinc-finger protein family. ZBTB18 subfamily.

It is found in the nucleus. Its function is as follows. Transcriptional repressor that plays a role in various developmental processes. Specifically binds the consensus DNA sequence 5'-[AC]ACATCTG[GT][AC]-3' which contains the E box core, and acts by recruiting chromatin remodeling multiprotein complexes. This is Zinc finger and BTB domain-containing protein 18 (zbtb18) from Danio rerio (Zebrafish).